Consider the following 1298-residue polypeptide: Phosphoribosylformylglycinamidine synthase (1298 aa).

The tract at residues 301–328 (APFPGASTGSGGEIRDEGATGRGAKPKA) is disordered. ATP-binding positions include 305–316 (GASTGSGGEIRD), 384–386 (TGY), and Ala676. Residues Asp677, Glu716, Asn720, and Asp884 each contribute to the Mg(2+) site. Ser886 is a binding site for ATP. A Glutamine amidotransferase type-1 domain is found at 1045 to 1298 (VAVLREQGVN…MFRNARVWVN (254 aa)). Cys1138 functions as the Nucleophile in the catalytic mechanism. Catalysis depends on residues His1263 and Glu1265.

This sequence in the N-terminal section; belongs to the FGAMS family. Monomer.

The protein resides in the cytoplasm. The catalysed reaction is N(2)-formyl-N(1)-(5-phospho-beta-D-ribosyl)glycinamide + L-glutamine + ATP + H2O = 2-formamido-N(1)-(5-O-phospho-beta-D-ribosyl)acetamidine + L-glutamate + ADP + phosphate + H(+). It participates in purine metabolism; IMP biosynthesis via de novo pathway; 5-amino-1-(5-phospho-D-ribosyl)imidazole from N(2)-formyl-N(1)-(5-phospho-D-ribosyl)glycinamide: step 1/2. Functionally, phosphoribosylformylglycinamidine synthase involved in the purines biosynthetic pathway. Catalyzes the ATP-dependent conversion of formylglycinamide ribonucleotide (FGAR) and glutamine to yield formylglycinamidine ribonucleotide (FGAM) and glutamate. The protein is Phosphoribosylformylglycinamidine synthase of Pseudomonas fluorescens (strain Pf0-1).